We begin with the raw amino-acid sequence, 1220 residues long: DNA-directed RNA polymerase subunit beta (1220 aa).

Belongs to the RNA polymerase beta chain family. As to quaternary structure, the RNAP catalytic core consists of 2 alpha, 1 beta, 1 beta' and 1 omega subunit. When a sigma factor is associated with the core the holoenzyme is formed, which can initiate transcription.

It catalyses the reaction RNA(n) + a ribonucleoside 5'-triphosphate = RNA(n+1) + diphosphate. Its function is as follows. DNA-dependent RNA polymerase catalyzes the transcription of DNA into RNA using the four ribonucleoside triphosphates as substrates. In Mesomycoplasma hyopneumoniae (strain J / ATCC 25934 / NCTC 10110) (Mycoplasma hyopneumoniae), this protein is DNA-directed RNA polymerase subunit beta.